The sequence spans 364 residues: Popeye domain-containing protein 2 (364 aa).

Asn4 carries N-linked (GlcNAc...) asparagine glycosylation. A run of 2 helical transmembrane segments spans residues 37–57 (LLLG…FGFL) and 77–97 (IVLW…HLVY). Residues 276–333 (ADAGPESEKGDEEVCEPAVSPPQATPTSLQQTPPCSTPPATTNFPAPPTRARLSRPDS) form a disordered region. Residues 300–309 (TPTSLQQTPP) show a composition bias toward polar residues. Position 361 is a phosphothreonine (Thr361).

Belongs to the popeye family. Expressed predominantly in the heart and in the skeletal muscle.

Its subcellular location is the membrane. It is found in the cell membrane. It localises to the sarcolemma. In terms of biological role, important for the maintenance of cardiac function. Plays a regulatory function in heart rate dynamics mediated, at least in part, through cAMP-binding and, probably, by increasing cell surface expression of the potassium channel KCNK2 and enhancing current density. The protein is Popeye domain-containing protein 2 (POPDC2) of Homo sapiens (Human).